Reading from the N-terminus, the 786-residue chain is LPS-assembly protein LptD (786 aa).

Positions 1 to 39 (MPPKPLFPNVFPGDGAPRKRRLALALLAVPGLVPAVSYA) are cleaved as a signal peptide.

Belongs to the LptD family. Component of the lipopolysaccharide transport and assembly complex. Interacts with LptE and LptA.

The protein resides in the cell outer membrane. In terms of biological role, together with LptE, is involved in the assembly of lipopolysaccharide (LPS) at the surface of the outer membrane. The chain is LPS-assembly protein LptD from Burkholderia ambifaria (strain ATCC BAA-244 / DSM 16087 / CCUG 44356 / LMG 19182 / AMMD) (Burkholderia cepacia (strain AMMD)).